The chain runs to 228 residues: Triosephosphate isomerase (228 aa).

9 to 11 (NFK) contacts substrate. His93 (electrophile) is an active-site residue. Residue Glu141 is the Proton acceptor of the active site. Residues Ile146, Gly180, and 201–202 (AS) contribute to the substrate site.

Belongs to the triosephosphate isomerase family. Homotetramer; dimer of dimers.

The protein resides in the cytoplasm. The catalysed reaction is D-glyceraldehyde 3-phosphate = dihydroxyacetone phosphate. The protein operates within carbohydrate biosynthesis; gluconeogenesis. Its pathway is carbohydrate degradation; glycolysis; D-glyceraldehyde 3-phosphate from glycerone phosphate: step 1/1. Involved in the gluconeogenesis. Catalyzes stereospecifically the conversion of dihydroxyacetone phosphate (DHAP) to D-glyceraldehyde-3-phosphate (G3P). The protein is Triosephosphate isomerase of Metallosphaera sedula (strain ATCC 51363 / DSM 5348 / JCM 9185 / NBRC 15509 / TH2).